Consider the following 547-residue polypeptide: Glucose-6-phosphate isomerase (547 aa).

The Proton donor role is filled by Glu-353. Active-site residues include His-384 and Lys-512.

The protein belongs to the GPI family.

It is found in the cytoplasm. The enzyme catalyses alpha-D-glucose 6-phosphate = beta-D-fructose 6-phosphate. It participates in carbohydrate biosynthesis; gluconeogenesis. Its pathway is carbohydrate degradation; glycolysis; D-glyceraldehyde 3-phosphate and glycerone phosphate from D-glucose: step 2/4. Its function is as follows. Catalyzes the reversible isomerization of glucose-6-phosphate to fructose-6-phosphate. The sequence is that of Glucose-6-phosphate isomerase from Campylobacter jejuni subsp. doylei (strain ATCC BAA-1458 / RM4099 / 269.97).